Reading from the N-terminus, the 464-residue chain is Argininosuccinate lyase 2 (464 aa).

The protein belongs to the lyase 1 family. Argininosuccinate lyase subfamily.

The protein localises to the cytoplasm. The enzyme catalyses 2-(N(omega)-L-arginino)succinate = fumarate + L-arginine. It participates in amino-acid biosynthesis; L-arginine biosynthesis; L-arginine from L-ornithine and carbamoyl phosphate: step 3/3. This Pseudomonas fluorescens (strain Pf0-1) protein is Argininosuccinate lyase 2.